A 493-amino-acid chain; its full sequence is Transcript termination protein A18 (493 aa).

In terms of domain architecture, Helicase ATP-binding spans 100–256; it reads MIELKRPLYI…NSIINIAKLS (157 aa). 113-120 contacts ATP; that stretch reads LACGFGKT. A DESH box motif is present at residues 206-209; it reads DESH.

The protein belongs to the helicase family. Poxviruses subfamily. In terms of assembly, interacts with G2. Might be part of a transcription complex composed at least of G2, A18, and H5.

The protein resides in the virion. In terms of biological role, DNA helicase which seems to act as a postreplicative transcription termination factor. Involved in ATP-dependent release of nascent RNA. Forms a stable complex with single-stranded DNA, and to a lesser extent RNA. The sequence is that of Transcript termination protein A18 from Cowpox virus (strain GRI-90 / Grishak) (CPV).